The primary structure comprises 154 residues: UPF0225 protein YPDSF_0962 (154 aa).

Belongs to the UPF0225 family.

The sequence is that of UPF0225 protein YPDSF_0962 from Yersinia pestis (strain Pestoides F).